A 1076-amino-acid polypeptide reads, in one-letter code: Isoleucine--tRNA ligase (1076 aa).

The 'HIGH' region motif lies at P47–T57. The short motif at K591–S595 is the 'KMSKS' region element. An ATP-binding site is contributed by K594.

Belongs to the class-I aminoacyl-tRNA synthetase family. IleS type 2 subfamily. In terms of assembly, monomer. Requires Zn(2+) as cofactor.

The protein resides in the cytoplasm. It catalyses the reaction tRNA(Ile) + L-isoleucine + ATP = L-isoleucyl-tRNA(Ile) + AMP + diphosphate. In terms of biological role, catalyzes the attachment of isoleucine to tRNA(Ile). As IleRS can inadvertently accommodate and process structurally similar amino acids such as valine, to avoid such errors it has two additional distinct tRNA(Ile)-dependent editing activities. One activity is designated as 'pretransfer' editing and involves the hydrolysis of activated Val-AMP. The other activity is designated 'posttransfer' editing and involves deacylation of mischarged Val-tRNA(Ile). The chain is Isoleucine--tRNA ligase from Methanoregula boonei (strain DSM 21154 / JCM 14090 / 6A8).